Reading from the N-terminus, the 63-residue chain is Large ribosomal subunit protein uL30 (63 aa).

Belongs to the universal ribosomal protein uL30 family. As to quaternary structure, part of the 50S ribosomal subunit.

In Xanthomonas axonopodis pv. citri (strain 306), this protein is Large ribosomal subunit protein uL30.